A 438-amino-acid polypeptide reads, in one-letter code: EF-hand calcium-binding domain-containing protein 3 (438 aa).

EF-hand domains lie at 47-82 and 83-118; these read SQMR…LGMN and LTKH…KNRF. Aspartate 96, aspartate 98, aspartate 100, lysine 102, and aspartate 107 together coordinate Ca(2+). Tyrosine 279 bears the Phosphotyrosine mark. The tract at residues 413–438 is disordered; it reads SSSDISECDTDTGRKRKRKGFKGFRQ. A compositionally biased stretch (basic residues) spans 426–438; it reads RKRKRKGFKGFRQ.

In Bos taurus (Bovine), this protein is EF-hand calcium-binding domain-containing protein 3 (EFCAB3).